Reading from the N-terminus, the 348-residue chain is Histidinol-phosphate aminotransferase (348 aa).

Position 210 is an N6-(pyridoxal phosphate)lysine (K210).

The protein belongs to the class-II pyridoxal-phosphate-dependent aminotransferase family. Histidinol-phosphate aminotransferase subfamily. In terms of assembly, homodimer. Pyridoxal 5'-phosphate serves as cofactor.

The catalysed reaction is L-histidinol phosphate + 2-oxoglutarate = 3-(imidazol-4-yl)-2-oxopropyl phosphate + L-glutamate. The protein operates within amino-acid biosynthesis; L-histidine biosynthesis; L-histidine from 5-phospho-alpha-D-ribose 1-diphosphate: step 7/9. The polypeptide is Histidinol-phosphate aminotransferase (Pseudomonas putida (strain ATCC 700007 / DSM 6899 / JCM 31910 / BCRC 17059 / LMG 24140 / F1)).